Consider the following 1032-residue polypeptide: Probable LRR receptor-like serine/threonine-protein kinase At1g56130 (1032 aa).

Residues 1–29 (MTRIRRSPCLLLLIIWFMCIAGSVQVVQS) form the signal peptide. Over 30–636 (QNQTGATTHP…PPSKGKNRTG (607 aa)) the chain is Extracellular. N-linked (GlcNAc...) asparagine glycans are attached at residues Asn31, Asn61, and Asn95. 10 LRR repeats span residues 101–122 (ITNIKVYAIDVVGPIPPELWTL), 123–146 (TYLTNLNLGQNVLTGSLPPAIGNL), 148–170 (RMQWMTFGINALSGPVPKEIGLL), 171–194 (TDLRLLGISSNNFSGSIPDEIGRC), 196–217 (KLQQMYIDSSGLSGRIPLSFAN), 242–265 (WTKLTTLRIIGTGLSGPIPSSFSN), 290–314 (MKSLSVLVLRNNNLTGTIPSTIGEH), 315–338 (SSLRQVDLSFNKLHGPIPASLFNL), 340–360 (QLTHLFLGNNTLNGSFPTQKT), and 361–385 (QSLRNVDVSYNDLSGSLPSWVSLPS). Asn145 is a glycosylation site (N-linked (GlcNAc...) asparagine). Asn182 carries an N-linked (GlcNAc...) asparagine glycan. Asn265, Asn302, Asn337, Asn348, and Asn352 each carry an N-linked (GlcNAc...) asparagine glycan. Asn394, Asn580, and Asn633 each carry an N-linked (GlcNAc...) asparagine glycan. A helical transmembrane segment spans residues 637 to 657 (TIVGVIVGVGLLSILAGVVMF). The Cytoplasmic portion of the chain corresponds to 658-1032 (TIRKRRKRYT…MLGSKINEGR (375 aa)). A Phosphothreonine modification is found at Thr683. Positions 694-968 (FDPSNKLGEG…VAMLSGDVEI (275 aa)) constitute a Protein kinase domain. Residues 700–708 (LGEGGFGPV) and Lys722 each bind ATP. Tyr767 is subject to Phosphotyrosine. Asp818 functions as the Proton acceptor in the catalytic mechanism. Phosphoserine occurs at positions 822 and 851. A phosphothreonine mark is found at Thr852 and Thr857. Tyr865 bears the Phosphotyrosine mark. Residues 1008–1032 (APGSEISPRDSDFKPMLGSKINEGR) form a disordered region.

The protein belongs to the protein kinase superfamily. Ser/Thr protein kinase family.

Its subcellular location is the cell membrane. The catalysed reaction is L-seryl-[protein] + ATP = O-phospho-L-seryl-[protein] + ADP + H(+). It carries out the reaction L-threonyl-[protein] + ATP = O-phospho-L-threonyl-[protein] + ADP + H(+). This chain is Probable LRR receptor-like serine/threonine-protein kinase At1g56130, found in Arabidopsis thaliana (Mouse-ear cress).